We begin with the raw amino-acid sequence, 189 residues long: Crossover junction endodeoxyribonuclease RuvC (189 aa).

Catalysis depends on residues Asp7, Glu68, and Asp141. Residues Asp7, Glu68, and Asp141 each coordinate Mg(2+).

The protein belongs to the RuvC family. As to quaternary structure, homodimer which binds Holliday junction (HJ) DNA. The HJ becomes 2-fold symmetrical on binding to RuvC with unstacked arms; it has a different conformation from HJ DNA in complex with RuvA. In the full resolvosome a probable DNA-RuvA(4)-RuvB(12)-RuvC(2) complex forms which resolves the HJ. Mg(2+) serves as cofactor.

Its subcellular location is the cytoplasm. It catalyses the reaction Endonucleolytic cleavage at a junction such as a reciprocal single-stranded crossover between two homologous DNA duplexes (Holliday junction).. In terms of biological role, the RuvA-RuvB-RuvC complex processes Holliday junction (HJ) DNA during genetic recombination and DNA repair. Endonuclease that resolves HJ intermediates. Cleaves cruciform DNA by making single-stranded nicks across the HJ at symmetrical positions within the homologous arms, yielding a 5'-phosphate and a 3'-hydroxyl group; requires a central core of homology in the junction. The consensus cleavage sequence is 5'-(A/T)TT(C/G)-3'. Cleavage occurs on the 3'-side of the TT dinucleotide at the point of strand exchange. HJ branch migration catalyzed by RuvA-RuvB allows RuvC to scan DNA until it finds its consensus sequence, where it cleaves and resolves the cruciform DNA. The polypeptide is Crossover junction endodeoxyribonuclease RuvC (Rhodococcus jostii (strain RHA1)).